The following is a 294-amino-acid chain: Large ribosomal subunit protein uL4m (294 aa).

The segment at 120 to 139 (VRGGGRKPWQQKGSGRARHG) is disordered. The residue at position 147 (Arg147) is an Omega-N-methylarginine.

It belongs to the universal ribosomal protein uL4 family. As to quaternary structure, component of the mitochondrial ribosome large subunit (39S) which comprises a 16S rRNA and about 50 distinct proteins. Interacts with MIEF1 upstream open reading frame protein.

It is found in the mitochondrion. The polypeptide is Large ribosomal subunit protein uL4m (MRPL4) (Bos taurus (Bovine)).